We begin with the raw amino-acid sequence, 65 residues long: Large ribosomal subunit protein bL35 (65 aa).

The tract at residues 30–65 (AFRSHLAQNKSTKQKRQSKHGTFMHPTDYKRLKDLM) is disordered. Basic and acidic residues predominate over residues 56–65 (TDYKRLKDLM).

The protein belongs to the bacterial ribosomal protein bL35 family.

In Mycoplasma mobile (strain ATCC 43663 / 163K / NCTC 11711) (Mesomycoplasma mobile), this protein is Large ribosomal subunit protein bL35.